Consider the following 1233-residue polypeptide: STE20-like serine/threonine-protein kinase (1233 aa).

S14 is modified (phosphoserine). The Protein kinase domain occupies 34–292 (WEIIGELGDG…TSQLLQHPFV (259 aa)). Residues 40-48 (LGDGAFGKV) and K63 contribute to the ATP site. D155 functions as the Proton acceptor in the catalytic mechanism. T183 is subject to Phosphothreonine. The residue at position 189 (S189) is a Phosphoserine. The interval 309 to 351 (AEVTEEVEDGKEEDEEEEAENALPIPANKRASSDLSIASSEED) is disordered. Residues 312-328 (TEEVEDGKEEDEEEEAE) are compositionally biased toward acidic residues. Phosphoserine occurs at positions 340, 341, 344, 347, 348, 354, and 372. Residues 363 to 399 (VSERTEQSTSEDKFSNKILNEKPTTDGPEKAVDEHAS) show a composition bias toward basic and acidic residues. Disordered stretches follow at residues 363–453 (VSER…ENNR), 498–650 (VSQE…SIEE), 663–761 (ALGS…SGDL), and 772–791 (AKDSGSVSLQETRRQKKTLK). The span at 432-441 (PDTQDQQTVD) shows a compositional bias: polar residues. Residues 518–529 (LTKEETQEKLGK) show a composition bias toward basic and acidic residues. A phosphoserine mark is found at S543, S561, and S566. The segment covering 598–607 (GGERVEDKQP) has biased composition (basic and acidic residues). The span at 619-630 (QLTSTSETTRAT) shows a compositional bias: polar residues. Residues S643, S647, and S666 each carry the phosphoserine modification. The segment covering 690-701 (AESQAPAASQPS) has biased composition (low complexity). Positions 746 to 761 (TDSGTGSTVENSSGDL) are enriched in polar residues. Residues S775 and S777 each carry the phosphoserine modification. T812 is modified (phosphothreonine). Position 816 is a phosphoserine (S816). Residues 824–1067 (LRRQELRELR…LKNRQTQERA (244 aa)) adopt a coiled-coil conformation. Residues 873–908 (DQEIENLEKQQKQTIERLEQEHTNRLRDEAKRIKGE) enclose the UVR domain. The tract at residues 944-963 (KRRKEELAQSQHAQEQEFVQ) is disordered. The span at 954–963 (QHAQEQEFVQ) shows a compositional bias: low complexity. The residue at position 1095 (T1095) is a Phosphothreonine. The stretch at 1107–1181 (AAQEEKRQKN…ELKEWREKLR (75 aa)) forms a coiled coil. A disordered region spans residues 1109 to 1129 (QEEKRQKNERMAQHQKHESQM).

The protein belongs to the protein kinase superfamily. STE Ser/Thr protein kinase family. STE20 subfamily. In terms of processing, proteolytically cleaved by caspase-3. Post-translationally, autophosphorylated. In terms of tissue distribution, ubiquitously expressed.

It is found in the cytoplasm. It carries out the reaction L-seryl-[protein] + ATP = O-phospho-L-seryl-[protein] + ADP + H(+). The catalysed reaction is L-threonyl-[protein] + ATP = O-phospho-L-threonyl-[protein] + ADP + H(+). In terms of biological role, mediates apoptosis and actin stress fiber dissolution. This Mus musculus (Mouse) protein is STE20-like serine/threonine-protein kinase (Slk).